Here is a 472-residue protein sequence, read N- to C-terminus: Ras-GEF domain-containing family member 1B (472 aa).

One can recognise an N-terminal Ras-GEF domain in the interval 34–164; the sequence is HDNNLLSGSL…MIQCLIRKLA (131 aa). The Ras-GEF domain occupies 204-452; sequence DPYTLAQQLT…YLASYESEGP (249 aa).

In terms of assembly, interacts with CCDC124 during cytokinesis. Interacts with Ras family proteins.

The protein resides in the early endosome. Its subcellular location is the late endosome. It localises to the midbody. Its function is as follows. Guanine nucleotide exchange factor (GEF) with specificity for RAP2A, it doesn't seems to activate other Ras family proteins (in vitro). This Bos taurus (Bovine) protein is Ras-GEF domain-containing family member 1B (RASGEF1B).